Here is a 332-residue protein sequence, read N- to C-terminus: Methionine synthase (332 aa).

Positions 211, 213, and 296 each coordinate Zn(2+).

This sequence belongs to the archaeal MetE family. Zn(2+) is required as a cofactor.

It functions in the pathway amino-acid biosynthesis; L-methionine biosynthesis via de novo pathway. Catalyzes the transfer of a methyl group to L-homocysteine resulting in methionine formation. The physiological methyl donor is unknown. This is Methionine synthase from Saccharolobus islandicus (strain Y.N.15.51 / Yellowstone #2) (Sulfolobus islandicus).